Consider the following 744-residue polypeptide: 6-phosphofructo-2-kinase/fructose-2,6-bisphosphatase (744 aa).

Disordered regions lie at residues 1-23 (MGSG…GGQL) and 213-245 (RSLS…DGSP). Gly-2 carries the N-myristoyl glycine lipid modification. Residues 17-122 (NGGGGQLYVS…GDARLALFRL (106 aa)) enclose the CBM20 domain. Residues 213–232 (RSLSASGSFRNDSTPKAAQR) are compositionally biased toward polar residues. Residue Ser-220 is modified to Phosphoserine; by CPK3. Phosphoserine is present on residues Ser-276 and Ser-295. The tract at residues 301–549 (SLSASSFLID…VFFLVNTHLT (249 aa)) is 6-phosphofructo-2-kinase. Ser-303 is modified (phosphoserine; by CPK3). 349-357 (GLPARGKTF) is an ATP binding site. Beta-D-fructose 6-phosphate contacts are provided by Arg-382 and Arg-406. Asp-431 is an active-site residue. Residues Thr-433 and Arg-439 each coordinate beta-D-fructose 6-phosphate. Cys-460 is a catalytic residue. Residue 469–474 (NIRLKI) participates in ATP binding. Beta-D-fructose 6-phosphate-binding residues include Arg-496 and Tyr-500. A fructose-2,6-bisphosphatase region spans residues 550 to 744 (PRPILLTRHG…VQEKRYKLMD (195 aa)). Beta-D-fructose 2,6-bisphosphate is bound at residue Arg-557. His-558 serves as the catalytic Tele-phosphohistidine intermediate. The beta-D-fructose 2,6-bisphosphate site is built by Asn-564 and Gly-570. The Proton donor/acceptor role is filled by Glu-630. The beta-D-fructose 2,6-bisphosphate site is built by Tyr-641, Arg-655, Lys-659, Tyr-670, Gln-697, and Arg-701. Residue 652-655 (YESR) participates in ATP binding. 697-701 (QAVLR) serves as a coordination point for ATP.

The protein in the C-terminal section; belongs to the phosphoglycerate mutase family. In terms of assembly, interacts with 14-3-3 proteins; these interactions may regulate both nitrate assimilation and sucrose/starch partitioning in leaves during the diurnal cycle. Post-translationally, phosphorylation at Ser-220 and Ser-303 by CPK3 promotes 14-3-3 proteins binding.

The protein localises to the membrane. Its subcellular location is the cytoplasm. The catalysed reaction is beta-D-fructose 2,6-bisphosphate + H2O = beta-D-fructose 6-phosphate + phosphate. The enzyme catalyses beta-D-fructose 6-phosphate + ATP = beta-D-fructose 2,6-bisphosphate + ADP + H(+). Its activity is regulated as follows. 6-phosphofructo-2-kinase activity is activated by pyruvate. 6-phosphofructo-2-kinase activity is inhibited by PPi, phosphoenolpyruvate and 2-phosphoglycerate. Fructose-2,6-bisphosphatase activity is inhibited by pyruvate, fructose 1,6-bisphosphate and 6-phosphogluconate. Synthesis and degradation of fructose 2,6-bisphosphate. Regulates carbon partitioning between sucrose versus starch during the diurnal cycle. The protein is 6-phosphofructo-2-kinase/fructose-2,6-bisphosphatase (FKFBP) of Arabidopsis thaliana (Mouse-ear cress).